We begin with the raw amino-acid sequence, 20 residues long: Thylakoid lumenal 14.7 kDa protein (20 aa).

A disordered region spans residues 1–20 (KTGVNKPELLPKEETTVIDV). The segment covering 9–20 (LLPKEETTVIDV) has biased composition (basic and acidic residues).

The protein resides in the plastid. It localises to the chloroplast thylakoid lumen. The sequence is that of Thylakoid lumenal 14.7 kDa protein from Spinacia oleracea (Spinach).